Consider the following 123-residue polypeptide: Small ribosomal subunit protein uS13 (123 aa).

Residues 96-123 (GLPVRGQRTKTNARTRKGPKKTVAGKKK) form a disordered region.

It belongs to the universal ribosomal protein uS13 family. Part of the 30S ribosomal subunit. Forms a loose heterodimer with protein S19. Forms two bridges to the 50S subunit in the 70S ribosome.

Its function is as follows. Located at the top of the head of the 30S subunit, it contacts several helices of the 16S rRNA. In the 70S ribosome it contacts the 23S rRNA (bridge B1a) and protein L5 of the 50S subunit (bridge B1b), connecting the 2 subunits; these bridges are implicated in subunit movement. Contacts the tRNAs in the A and P-sites. The sequence is that of Small ribosomal subunit protein uS13 from Nocardia farcinica (strain IFM 10152).